The chain runs to 119 residues: DNA-binding protein TubR (119 aa).

Homodimer. Binds to TubZ filaments via the C-terminus of TubZ. DNA is not required for binding to TubZ.

A DNA-binding protein that is part of the type III plasmid partition system used to ensure correct segregation of the pBc10987 plasmid. Binds TubZ filaments but does not influence the GTPase activity of TubZ with or without DNA. Cooperatively binds to multiple regions in tubC (centromere-like site) upstream of its own gene with consensus sequence N(T/A)ATTNC(C/G)GNAAT(A/T)N; probably forms an extended DNA-protein filament. Binds sites in its own promoter region and presumably represses its expression; its effect on RNA expression has not been shown. Does not specifically bind to the putative origin of replication on pBc10987. The chain is DNA-binding protein TubR from Bacillus cereus (strain ATCC 10987 / NRS 248).